The chain runs to 3401 residues: Genome polyprotein (3401 aa).

At 1–104 (MPVRPRNKPK…GRKKRRSMTH (104 aa)) the chain is on the cytoplasmic side. Positions 101–117 (SMTHGIILSLGVTMVIG) are cleaved as a propeptide — ER anchor for the capsid protein C, removed in mature form by serine protease NS3. A helical transmembrane segment spans residues 105-125 (GIILSLGVTMVIGASLHHHGG). At 126–240 (RYLLNVTHAD…GERQIQRIER (115 aa)) the chain is on the extracellular side. N-linked (GlcNAc...) asparagine; by host glycans are attached at residues Asn130 and Asn146. The helical transmembrane segment at 241–261 (WMMRNPFYAAISLLLAWWVGS) threads the bilayer. Topologically, residues 262 to 266 (DIKQK) are cytoplasmic. Residues 267 to 281 (VLIAFLVLAIGPAYS) traverse the membrane as a helical segment. The Extracellular segment spans residues 282–725 (THCVGIPKRD…HTVFGNVFHS (444 aa)). Cystine bridges form between Cys284-Cys311, Cys355-Cys386, Cys373-Cys397, Cys462-Cys564, and Cys581-Cys611. Residues 379-392 (DRGWGNGCGLFGKG) are fusion peptide. A helical transmembrane segment spans residues 726 to 746 (IFGGLSWITKIILGGMFLWLG). The Extracellular segment spans residues 747–753 (VNSRNQT). Residues 754 to 774 (MCMVLMAVGGILLFMTLGVSG) traverse the membrane as a helical segment. The Extracellular portion of the chain corresponds to 775-1122 (EVGCSLDIKR…NVHEEHLVRS (348 aa)). 6 disulfide bridges follow: Cys778/Cys789, Cys829/Cys916, Cys952/Cys997, Cys1054/Cys1103, Cys1065/Cys1087, and Cys1086/Cys1090. N-linked (GlcNAc...) asparagine; by host glycans are attached at residues Asn904 and Asn981. A helical transmembrane segment spans residues 1123–1143 (WASAGTGMAESSLGLVALFLF). Topologically, residues 1144–1198 (TDIFARKRMTRKFMVIGCLGVLSVMIVGGFTALDLIRYIIVVGQHFASMNHGGDV) are cytoplasmic. The helical transmembrane segment at 1199 to 1219 (AYLAIIAVGKLRPGLLMMYSF) threads the bilayer. At 1220-1287 (KAAWSPKERV…PILALLTPLS (68 aa)) the chain is on the lumenal side. A helical transmembrane segment spans residues 1288–1308 (MEIIRKTGIFACVGLLGLSLW). At 1309-1352 (RGGDTTMRKGMPLLAGAATAASGLTRASLSVVFILCATAASRRS) the chain is on the cytoplasmic side. A helical transmembrane segment spans residues 1353-1373 (WPIGEIMAIVGIVGTGFGMAV). The Lumenal segment spans residues 1374–1376 (NDQ). A helical membrane pass occupies residues 1377-1397 (ASLAGPMLVFGLIMIVYATLG). The Cytoplasmic portion of the chain corresponds to 1398-1447 (RADGLTLKRVGDITWEEEAVHSGSSTRYDVTLNEAGEFKLVHEEPVVWSH). Positions 1404–1443 (LKRVGDITWEEEAVHSGSSTRYDVTLNEAGEFKLVHEEPV) are interacts with and activates NS3 protease. Residues 1448–1468 (VVFLVVALIAASVHPIALVVV) constitute an intramembrane region (helical). Topologically, residues 1469-2154 (TIIWTYGKKH…ASTNAPEAVT (686 aa)) are cytoplasmic. One can recognise a Peptidase S7 domain in the interval 1481–1661 (GGVLWDIPIA…GGEGVTEEPL (181 aa)). Catalysis depends on charge relay system; for serine protease NS3 activity residues His1532, Asp1556, and Ser1617. The 157-residue stretch at 1665-1821 (ATMLRKGKLT…ESNGEIEDLR (157 aa)) folds into the Helicase ATP-binding domain. The interval 1669-1672 (RKGK) is important for RNA-binding. Position 1678-1685 (1678-1685 (YHPGAGKT)) interacts with ATP. Positions 1769-1772 (DEAH) match the DEAH box motif. One can recognise a Helicase C-terminal domain in the interval 1816–1995 (EIEDLRRDIP…GMVAPLYDVE (180 aa)). Residues 2155–2175 (ILLMTGIVVACTLGVGLAFMW) traverse the membrane as a helical segment. Residues 2176–2181 (PKGVDK) are Lumenal-facing. The segment at residues 2182–2200 (MSMGMITMSIAGYLMLQGG) is an intramembrane region (helical). Position 2201 (Leu2201) is a topological domain, lumenal. A helical membrane pass occupies residues 2202-2222 (TPVQVASVLLIFFIFMVVLIP). The Cytoplasmic segment spans residues 2223–2235 (EAGTQRSINDNKT). The chain crosses the membrane as a helical span at residues 2236 to 2250 (LYVLLGVALLIGAIT). Topologically, residues 2251 to 2285 (ANEMGYLEKTKRDLLGERVQNEWKLELPMFDLRPG) are cytoplasmic. Positions 2286 to 2306 (AAWSIYVGLATLVMPVLDHWI) form an intramembrane region, helical. Over 2307-2354 (RTEYGSLSLTGIAQQASILQAMDKGVPFFKLNMSVIVLLVSVWNNFSM) the chain is Lumenal. Residues 2355–2375 (LSVLCGVGLLGVHCAFVLPGL) form a helical membrane-spanning segment. Topologically, residues 2376 to 2418 (RAQAAKQAQRRVYHGVAKNPVVDGQTTAEIETAPEMPPLYEKK) are cytoplasmic. A helical transmembrane segment spans residues 2419-2439 (LALVLLGVVAIANGVMVRSAF). Topologically, residues 2440–2467 (SMAETVVLLSAAVGPLLEGNTSAIWNGP) are lumenal. A helical transmembrane segment spans residues 2468–2488 (MAVAMAGIMRGNYYAGIGLAY). Over 2489-3401 (NLWILQSPKR…YSVQEVGTVL (913 aa)) the chain is Cytoplasmic. The region spanning 2499–2763 (GRSTTMTLGE…DVVFPTGTRN (265 aa)) is the mRNA cap 0-1 NS5-type MT domain. Ser2554 serves as a coordination point for S-adenosyl-L-methionine. Ser2554 bears the Phosphoserine mark. Lys2559 acts as the For 2'-O-MTase activity in catalysis. Positions 2584, 2585, 2602, 2603, 2629, and 2630 each coordinate S-adenosyl-L-methionine. Asp2644 serves as the catalytic For 2'-O-MTase activity. Ile2645 serves as a coordination point for S-adenosyl-L-methionine. Catalysis depends on for 2'-O-MTase activity residues Lys2680 and Glu2716. Position 2718 (Tyr2718) interacts with S-adenosyl-L-methionine. The Nuclear localization signal signature appears at 2869–2902 (RAIMEVVNKWMFDFLAREKAPRICTKEEFINKVR). Zn(2+)-binding residues include Glu2936, His2940, Cys2945, and Cys2948. In terms of domain architecture, RdRp catalytic spans 3026–3178 (GIMYADDTAG…APLDERFGLA (153 aa)). Zn(2+) contacts are provided by His3213, Cys3229, and Cys3348.

This sequence in the N-terminal section; belongs to the class I-like SAM-binding methyltransferase superfamily. mRNA cap 0-1 NS5-type methyltransferase family. As to quaternary structure, homodimer. Interacts (via N-terminus) with host EXOC1 (via C-terminus); this interaction results in EXOC1 degradation through the proteasome degradation pathway. Forms heterodimers with envelope protein E in the endoplasmic reticulum and Golgi. In terms of assembly, homodimer; in the endoplasmic reticulum and Golgi. Interacts with protein prM. Interacts with non-structural protein 1. As to quaternary structure, homodimer; Homohexamer when secreted. Interacts with envelope protein E. NS1 interacts with NS4B. Interacts with host complement protein CFH; this interaction leads to the degradation of C3. Interacts (via N-terminus) with serine protease NS3. In terms of assembly, forms a heterodimer with serine protease NS3. May form homooligomers. As to quaternary structure, forms a heterodimer with NS2B. Interacts with non-structural protein 2A (via N-terminus). Interacts with NS4B. Interacts with unphosphorylated RNA-directed RNA polymerase NS5; this interaction stimulates RNA-directed RNA polymerase NS5 guanylyltransferase activity. NS3 interacts with host PDCD6IP; this interaction contributes to virion release. Interacts with serine protease NS3. In terms of assembly, homodimer. Interacts with host STAT2; this interaction prevents the establishment of cellular antiviral state. Interacts with serine protease NS3. Interacts with host TRIM23; this interaction leads to NS5 ubiquitination. In terms of processing, specific enzymatic cleavages in vivo yield mature proteins. The nascent capsid protein C contains a C-terminal hydrophobic domain that act as a signal sequence for translocation of prM into the lumen of the ER. Mature capsid protein C is cleaved at a site upstream of this hydrophobic domain by NS3. prM is cleaved in post-Golgi vesicles by a host furin, releasing the mature small envelope protein M, and peptide pr. Non-structural protein 2A-alpha, a C-terminally truncated form of non-structural protein 2A, results from partial cleavage by NS3. Specific enzymatic cleavages in vivo yield mature proteins peptide 2K acts as a signal sequence and is removed from the N-terminus of NS4B by the host signal peptidase in the ER lumen. Signal cleavage at the 2K-4B site requires a prior NS3 protease-mediated cleavage at the 4A-2K site. Cleaved in post-Golgi vesicles by a host furin, releasing the mature small envelope protein M, and peptide pr. This cleavage is incomplete as up to 30% of viral particles still carry uncleaved prM. Post-translationally, N-glycosylated. In terms of processing, N-glycosylated. The excreted form is glycosylated and this is required for efficient secretion of the protein from infected cells. Polyubiquitinated; ubiquitination is probably mediated by host TRIM23 and is prerequisite for NS5-STAT2 interaction. NS5 is not ISGylated or sumoylated. Post-translationally, phosphorylated on serines residues. This phosphorylation may trigger NS5 nuclear localization.

The protein localises to the virion. The protein resides in the host nucleus. Its subcellular location is the host cytoplasm. It is found in the host perinuclear region. It localises to the virion membrane. The protein localises to the host endoplasmic reticulum membrane. The protein resides in the secreted. It carries out the reaction Selective hydrolysis of -Xaa-Xaa-|-Yaa- bonds in which each of the Xaa can be either Arg or Lys and Yaa can be either Ser or Ala.. It catalyses the reaction RNA(n) + a ribonucleoside 5'-triphosphate = RNA(n+1) + diphosphate. The enzyme catalyses a ribonucleoside 5'-triphosphate + H2O = a ribonucleoside 5'-diphosphate + phosphate + H(+). The catalysed reaction is ATP + H2O = ADP + phosphate + H(+). It carries out the reaction a 5'-end (5'-triphosphoguanosine)-ribonucleoside in mRNA + S-adenosyl-L-methionine = a 5'-end (N(7)-methyl 5'-triphosphoguanosine)-ribonucleoside in mRNA + S-adenosyl-L-homocysteine. It catalyses the reaction a 5'-end (N(7)-methyl 5'-triphosphoguanosine)-ribonucleoside in mRNA + S-adenosyl-L-methionine = a 5'-end (N(7)-methyl 5'-triphosphoguanosine)-(2'-O-methyl-ribonucleoside) in mRNA + S-adenosyl-L-homocysteine + H(+). Its function is as follows. Plays a role in virus budding by binding to the cell membrane and gathering the viral RNA into a nucleocapsid that forms the core of a mature virus particle. During virus entry, may induce genome penetration into the host cytoplasm after hemifusion induced by the surface proteins. Can migrate to the cell nucleus where it modulates host functions. Functionally, inhibits RNA silencing by interfering with host Dicer. Prevents premature fusion activity of envelope proteins in trans-Golgi by binding to envelope protein E at pH6.0. After virion release in extracellular space, gets dissociated from E dimers. In terms of biological role, acts as a chaperone for envelope protein E during intracellular virion assembly by masking and inactivating envelope protein E fusion peptide. prM is the only viral peptide matured by host furin in the trans-Golgi network probably to avoid catastrophic activation of the viral fusion activity in acidic Golgi compartment prior to virion release. prM-E cleavage is inefficient, and many virions are only partially matured. These uncleaved prM would play a role in immune evasion. Its function is as follows. May play a role in virus budding. Exerts cytotoxic effects by activating a mitochondrial apoptotic pathway through M ectodomain. May display a viroporin activity. Functionally, binds to host cell surface receptor and mediates fusion between viral and cellular membranes. Envelope protein is synthesized in the endoplasmic reticulum in the form of heterodimer with protein prM. They play a role in virion budding in the ER, and the newly formed immature particle is covered with 60 spikes composed of heterodimer between precursor prM and envelope protein E. The virion is transported to the Golgi apparatus where the low pH causes dissociation of PrM-E heterodimers and formation of E homodimers. prM-E cleavage is inefficient, and many virions are only partially matured. These uncleaved prM would play a role in immune evasion. Involved in immune evasion, pathogenesis and viral replication. Once cleaved off the polyprotein, is targeted to three destinations: the viral replication cycle, the plasma membrane and the extracellular compartment. Essential for viral replication. Required for formation of the replication complex and recruitment of other non-structural proteins to the ER-derived membrane structures. Excreted as a hexameric lipoparticle that plays a role against host immune response. Antagonizing the complement function. Binds to the host macrophages and dendritic cells. Inhibits signal transduction originating from Toll-like receptor 3 (TLR3). In terms of biological role, component of the viral RNA replication complex that functions in virion assembly and antagonizes the host immune response. Its function is as follows. Required cofactor for the serine protease function of NS3. May have membrane-destabilizing activity and form viroporins. Functionally, displays three enzymatic activities: serine protease, NTPase and RNA helicase. NS3 serine protease, in association with NS2B, performs its autocleavage and cleaves the polyprotein at dibasic sites in the cytoplasm: C-prM, NS2A-NS2B, NS2B-NS3, NS3-NS4A, NS4A-2K and NS4B-NS5. NS3 RNA helicase binds RNA and unwinds dsRNA in the 3' to 5' direction. Also plays a role in virus assembly. Regulates the ATPase activity of the NS3 helicase activity. NS4A allows NS3 helicase to conserve energy during unwinding. In terms of biological role, functions as a signal peptide for NS4B and is required for the interferon antagonism activity of the latter. Its function is as follows. Induces the formation of ER-derived membrane vesicles where the viral replication takes place. Inhibits interferon (IFN)-induced host STAT1 phosphorylation and nuclear translocation, thereby preventing the establishment of cellular antiviral state by blocking the IFN-alpha/beta pathway. Functionally, replicates the viral (+) and (-) RNA genome, and performs the capping of genomes in the cytoplasm. NS5 methylates viral RNA cap at guanine N-7 and ribose 2'-O positions. Besides its role in RNA genome replication, also prevents the establishment of cellular antiviral state by blocking the interferon-alpha/beta (IFN-alpha/beta) signaling pathway. IFN-I induces binding of NS5 to host IFN-activated transcription factor STAT2, preventing its transcriptional activity. Host TRIM23 is the E3 ligase that interacts with and polyubiquitinates NS5 to promote its binding to STAT2 and trigger IFN-I signaling inhibition. The polypeptide is Genome polyprotein (Edge Hill virus (EHV)).